An 832-amino-acid chain; its full sequence is Cation/H(+) antiporter 21 (832 aa).

Helical transmembrane passes span 33-55, 61-81, 99-119, 132-152, 161-181, 200-220, 236-256, 278-298, 319-339, 352-372, 379-399, and 413-433; these read ISAAAPFFMTQLSVANLTYRILY, LCLPPFVAQILCGLLFSPTVL, LLETFANLALVYNVFLLGLGL, VIIAIVGLLAALLAGAGLYYL, ILAGCMYWSIAFGCTNFPDLA, CAAVVTDLCTWILFIFGMAIF, STIAFVLLCYFVIQPGVAWIF, IICSLITEVCGVHSITGAFLF, FLSGMLMPLFYIICGLRADIG, VVTSASVMVKILSTMFCSIFL, GLAIGALMNTKGTMALVILNA, and HLTLAFLVMSMVVQPLLAIAY. A compositionally biased stretch (polar residues) spans 792-802; the sequence is RQTAENNNQEP. A disordered region spans residues 792–832; it reads RQTAENNNQEPVQGKAKTDHEATPFMEDEDDEVEHQYSMRR.

This sequence belongs to the monovalent cation:proton antiporter 2 (CPA2) transporter (TC 2.A.37) family. CHX (TC 2.A.37.4) subfamily. As to expression, specifically expressed in root endodermal cells. Expressed in seedlings, roots, leaves, flowers, flower buds and pollen.

The protein resides in the cell membrane. Functionally, operates as a Na(+)/H(+) antiporter that plays a role in regulation of xylem Na(+) concentration and, consequently, Na(+) accumulation in the leaf. Required for pollen tube guidance, but not for normal pollen development. May also be involved in the development or function of the female gametophyte. The protein is Cation/H(+) antiporter 21 (CHX21) of Arabidopsis thaliana (Mouse-ear cress).